We begin with the raw amino-acid sequence, 245 residues long: 14-3-3 protein zeta/delta (245 aa).

M1 bears the N-acetylmethionine mark. K3 bears the N6-acetyllysine mark. A Phosphoserine; by PKA modification is found at S58. K68 is modified (N6-acetyllysine). Phosphoserine occurs at positions 184, 207, and 210. T232 carries the phosphothreonine; by CK1 modification.

Belongs to the 14-3-3 family. In terms of assembly, interacts with CDK16 and BSPRY. Interacts with WEE1 (C-terminal). Interacts with SAMSN1. Interacts with MLF1 (phosphorylated form); the interaction retains it in the cytoplasm. Interacts with Thr-phosphorylated ITGB2. Interacts with BCL2L11. Homodimer. Heterodimerizes with YWHAE. Homo- and heterodimerization is inhibited by phosphorylation on Ser-58. Interacts with FOXO4, NOXA1, SSH1 and ARHGEF2. Interacts with Pseudomonas aeruginosa exoS (unphosphorylated form). Interacts with BAX; the interaction occurs in the cytoplasm. Under stress conditions, MAPK8-mediated phosphorylation releases BAX to mitochondria. Interacts with phosphorylated RAF1; the interaction is inhibited when YWHAZ is phosphorylated on Thr-232. Interacts with TP53; the interaction enhances p53 transcriptional activity. The Ser-58 phosphorylated form inhibits this interaction and p53 transcriptional activity. Interacts with ABL1 (phosphorylated form); the interaction retains ABL1 in the cytoplasm. Interacts with PKA-phosphorylated AANAT; the interaction modulates AANAT enzymatic activity by increasing affinity for arylalkylamines and acetyl-CoA and protecting the enzyme from dephosphorylation and proteasomal degradation. It may also prevent thiol-dependent inactivation. Interacts with AKT1; the interaction phosphorylates YWHAZ and modulates dimerization. Interacts with GAB2 and TLK2. Interacts with the 'Thr-369' phosphorylated form of DAPK2. Interacts with PI4KB, TBC1D22A and TBC1D22B. Interacts with ZFP36L1 (via phosphorylated form); this interaction occurs in a p38 MAPK- and AKT-signaling pathways. Interacts with SLITRK1. Interacts with AK5, LDB1, MADD, MARK3, PDE1A and SMARCB1. Interacts with YWHAZ. Interacts with MEFV. Interacts with ADAM22 (via C-terminus). In terms of processing, the delta, brain-specific form differs from the zeta form in being phosphorylated. Phosphorylation on Ser-184 by MAPK8; promotes dissociation of BAX and translocation of BAX to mitochondria. Phosphorylation on Thr-232; inhibits binding of RAF1. Phosphorylated on Ser-58 by PKA and protein kinase C delta type catalytic subunit in a sphingosine-dependent fashion. Phosphorylation on Ser-58 by PKA; disrupts homodimerization and heterodimerization with YHAE and TP53. As to expression, highly expressed in brain (at protein level).

Its subcellular location is the cytoplasm. The protein resides in the melanosome. Its function is as follows. Adapter protein implicated in the regulation of a large spectrum of both general and specialized signaling pathways. Binds to a large number of partners, usually by recognition of a phosphoserine or phosphothreonine motif. Binding generally results in the modulation of the activity of the binding partner. Promotes cytosolic retention and inactivation of TFEB transcription factor by binding to phosphorylated TFEB. Induces ARHGEF7 activity on RAC1 as well as lamellipodia and membrane ruffle formation. In neurons, regulates spine maturation through the modulation of ARHGEF7 activity. This Ovis aries (Sheep) protein is 14-3-3 protein zeta/delta (YWHAZ).